The sequence spans 182 residues: Succinate dehydrogenase cytochrome b560 subunit, mitochondrial (182 aa).

The helical transmembrane segment at 65-94 (LTWMLSGFHRISGCVMAGTLLVGGIGFAVL) threads the bilayer. Over 95-114 (PFDFTAFVDFIRSWNLPCAV) the chain is Mitochondrial intermembrane. Residues 115–139 (TAVFKYIIAFPIIFHTLNGIRFLGF) form a helical membrane-spanning segment. His-129 provides a ligand contact to heme. The Mitochondrial matrix segment spans residues 140–147 (DLAKGVNN). A helical transmembrane segment spans residues 148 to 169 (VGQIYKSGYLVSGLSAILALAI). The Mitochondrial intermembrane portion of the chain corresponds to 170-172 (VFN).

It belongs to the cytochrome b560 family. As to quaternary structure, component of complex II composed of four subunits: a flavoprotein (FP), iron-sulfur protein (IP), and a cytochrome b560 composed of two integral membrane proteins. Heme serves as cofactor.

It localises to the mitochondrion inner membrane. Its pathway is carbohydrate metabolism; tricarboxylic acid cycle. In terms of biological role, membrane-anchoring subunit of succinate dehydrogenase (SDH) that is involved in complex II of the mitochondrial electron transport chain and is responsible for transferring electrons from succinate to ubiquinone (coenzyme Q). Mediates resistance to enteropathogenic E.coli infection. This Caenorhabditis elegans protein is Succinate dehydrogenase cytochrome b560 subunit, mitochondrial (mev-1).